Reading from the N-terminus, the 216-residue chain is Uracil phosphoribosyltransferase (216 aa).

Residues Arg-85, Arg-110, and 135–143 each bind 5-phospho-alpha-D-ribose 1-diphosphate; that span reads DPMVATGYS. Residues Ile-200 and 205–207 contribute to the uracil site; that span reads GDA. Asp-206 provides a ligand contact to 5-phospho-alpha-D-ribose 1-diphosphate.

The protein belongs to the UPRTase family. It depends on Mg(2+) as a cofactor.

It catalyses the reaction UMP + diphosphate = 5-phospho-alpha-D-ribose 1-diphosphate + uracil. It functions in the pathway pyrimidine metabolism; UMP biosynthesis via salvage pathway; UMP from uracil: step 1/1. Its activity is regulated as follows. Allosterically activated by GTP. Functionally, catalyzes the conversion of uracil and 5-phospho-alpha-D-ribose 1-diphosphate (PRPP) to UMP and diphosphate. The chain is Uracil phosphoribosyltransferase from Burkholderia mallei (strain NCTC 10247).